The following is a 296-amino-acid chain: Glycine--tRNA ligase alpha subunit (296 aa).

It belongs to the class-II aminoacyl-tRNA synthetase family. As to quaternary structure, tetramer of two alpha and two beta subunits.

The protein resides in the cytoplasm. The catalysed reaction is tRNA(Gly) + glycine + ATP = glycyl-tRNA(Gly) + AMP + diphosphate. The chain is Glycine--tRNA ligase alpha subunit from Listeria innocua serovar 6a (strain ATCC BAA-680 / CLIP 11262).